Consider the following 160-residue polypeptide: Transcription elongation factor GreA (160 aa).

A coiled-coil region spans residues 14–38; sequence IKAELASLKKERPEVIKAIAEAREE.

It belongs to the GreA/GreB family.

Functionally, necessary for efficient RNA polymerase transcription elongation past template-encoded arresting sites. The arresting sites in DNA have the property of trapping a certain fraction of elongating RNA polymerases that pass through, resulting in locked ternary complexes. Cleavage of the nascent transcript by cleavage factors such as GreA or GreB allows the resumption of elongation from the new 3'terminus. GreA releases sequences of 2 to 3 nucleotides. This Maridesulfovibrio salexigens (strain ATCC 14822 / DSM 2638 / NCIMB 8403 / VKM B-1763) (Desulfovibrio salexigens) protein is Transcription elongation factor GreA.